Reading from the N-terminus, the 318-residue chain is Homeobox protein Nkx-2.5 (318 aa).

Positions 137-196 (RRKPRVLFSQAQVYELERRFKQQRYLSPAERDQLASVLKLTSTQVKIWFQNRRYKCKRQR) form a DNA-binding region, homeobox.

This sequence belongs to the NK-2 homeobox family. As to quaternary structure, homodimer (via the homeobox); binds DNA as homodimer. Interacts (via the homeobox) with TBX5 (via the T-box); this complex binds DNA. Interacts with HIPK1 and HIPK2, but not HIPK3. Interacts with the C-terminal zinc finger of GATA4 through its homeobox domain. Also interacts with JARID2 which represses its ability to activate transcription of ANF. Interacts with FBLIM1. Interacts with TBX18. Interacts with histone methyltransferase NSD2 (via HMG box). Interacts with NEDD9. Interacts with TBX1.

It localises to the nucleus. Transcription factor required for the development of the heart and the spleen. During heart development, acts as a transcriptional activator of NPPA/ANF in cooperation with GATA4. May cooperate with TBX2 to negatively modulate expression of NPPA/ANF in the atrioventricular canal. Binds to the core DNA motif of NPPA promoter. Together with PBX1, required for spleen development through a mechanism that involves CDKN2B repression. Positively regulates transcription of genes such as COL3A1 and MMP2, resulting in increased pulmonary endothelial fibrosis in response to hypoxia. The chain is Homeobox protein Nkx-2.5 (Nkx2-5) from Rattus norvegicus (Rat).